The following is a 115-amino-acid chain: Histone H2A-Bbd type 2/3 (115 aa).

A disordered region spans residues 1–21; the sequence is MPRRRRRRGSSGAGGRGRTCS. The interval 87–115 is docking domain; that stretch reads LLDMVVHNDRLLSTLFNTTTISQVAPGED.

The protein belongs to the histone H2A family. In terms of assembly, the nucleosome is a histone octamer containing two molecules each of H2A, H2B, H3 and H4 assembled in one H3-H4 heterotetramer and two H2A-H2B heterodimers. May be incorporated into a proportion of nucleosomes, replacing one or more H2A molecules. As to expression, present in mature sperm.

It is found in the nucleus. The protein resides in the chromosome. Its function is as follows. Atypical histone H2A which can replace conventional H2A in some nucleosomes and is associated with active transcription and mRNA processing. Nucleosomes wrap and compact DNA into chromatin, limiting DNA accessibility to the cellular machineries which require DNA as a template. Histones thereby play a central role in transcription regulation, DNA repair, DNA replication and chromosomal stability. Nucleosomes containing this histone are less rigid and organize less DNA than canonical nucleosomes in vivo. They are enriched in actively transcribed genes and associate with the elongating form of RNA polymerase. They associate with spliceosome components and are required for mRNA splicing. May participate in spermatogenesis. In Homo sapiens (Human), this protein is Histone H2A-Bbd type 2/3.